The primary structure comprises 1179 residues: ATP-dependent helicase/deoxyribonuclease subunit B (1179 aa).

This sequence belongs to the helicase family. AddB/RexB type 2 subfamily. Heterodimer of AddA and RexB. It depends on Mg(2+) as a cofactor.

Its function is as follows. The heterodimer acts as both an ATP-dependent DNA helicase and an ATP-dependent, dual-direction single-stranded exonuclease. Recognizes the chi site generating a DNA molecule suitable for the initiation of homologous recombination. This subunit has 5' -&gt; 3' nuclease activity but not helicase activity. The polypeptide is ATP-dependent helicase/deoxyribonuclease subunit B (Lactobacillus delbrueckii subsp. bulgaricus (strain ATCC BAA-365 / Lb-18)).